Reading from the N-terminus, the 107-residue chain is Large ribosomal subunit protein uL24 (107 aa).

The protein belongs to the universal ribosomal protein uL24 family. Part of the 50S ribosomal subunit.

Functionally, one of two assembly initiator proteins, it binds directly to the 5'-end of the 23S rRNA, where it nucleates assembly of the 50S subunit. One of the proteins that surrounds the polypeptide exit tunnel on the outside of the subunit. The polypeptide is Large ribosomal subunit protein uL24 (Gluconacetobacter diazotrophicus (strain ATCC 49037 / DSM 5601 / CCUG 37298 / CIP 103539 / LMG 7603 / PAl5)).